The chain runs to 140 residues: Organic hydroperoxide resistance protein-like (140 aa).

The protein belongs to the OsmC/Ohr family.

The sequence is that of Organic hydroperoxide resistance protein-like from Staphylococcus aureus (strain MSSA476).